The following is a 68-amino-acid chain: Small ribosomal subunit protein bS21 (68 aa).

This sequence belongs to the bacterial ribosomal protein bS21 family.

This is Small ribosomal subunit protein bS21 from Paracoccus denitrificans (strain Pd 1222).